We begin with the raw amino-acid sequence, 553 residues long: Dihydroxy-acid dehydratase (553 aa).

D78 is a Mg(2+) binding site. [2Fe-2S] cluster is bound at residue C119. Mg(2+) is bound by residues D120 and K121. N6-carboxylysine is present on K121. C191 is a [2Fe-2S] cluster binding site. E444 is a Mg(2+) binding site. S470 acts as the Proton acceptor in catalysis.

It belongs to the IlvD/Edd family. Homodimer. [2Fe-2S] cluster serves as cofactor. The cofactor is Mg(2+).

It carries out the reaction (2R)-2,3-dihydroxy-3-methylbutanoate = 3-methyl-2-oxobutanoate + H2O. The enzyme catalyses (2R,3R)-2,3-dihydroxy-3-methylpentanoate = (S)-3-methyl-2-oxopentanoate + H2O. The protein operates within amino-acid biosynthesis; L-isoleucine biosynthesis; L-isoleucine from 2-oxobutanoate: step 3/4. It participates in amino-acid biosynthesis; L-valine biosynthesis; L-valine from pyruvate: step 3/4. In terms of biological role, functions in the biosynthesis of branched-chain amino acids. Catalyzes the dehydration of (2R,3R)-2,3-dihydroxy-3-methylpentanoate (2,3-dihydroxy-3-methylvalerate) into 2-oxo-3-methylpentanoate (2-oxo-3-methylvalerate) and of (2R)-2,3-dihydroxy-3-methylbutanoate (2,3-dihydroxyisovalerate) into 2-oxo-3-methylbutanoate (2-oxoisovalerate), the penultimate precursor to L-isoleucine and L-valine, respectively. The chain is Dihydroxy-acid dehydratase from Methanosarcina barkeri (strain Fusaro / DSM 804).